The chain runs to 663 residues: Translation factor guf1, mitochondrial (663 aa).

The N-terminal 51 residues, 1 to 51, are a transit peptide targeting the mitochondrion; it reads MRGCLQVLRWLSTSTARRPVSSRPLHEIFPKSEFRRPFTSTILRQAQASRN. One can recognise a tr-type G domain in the interval 65 to 245; the sequence is ERFRNFCIVA…TVIERIPAPV (181 aa). Residues 74-81, 138-142, and 192-195 each bind GTP; these read AHVDHGKS, DTPGH, and NKVD.

Belongs to the TRAFAC class translation factor GTPase superfamily. Classic translation factor GTPase family. LepA subfamily.

It localises to the mitochondrion inner membrane. The catalysed reaction is GTP + H2O = GDP + phosphate + H(+). Its function is as follows. Promotes mitochondrial protein synthesis. May act as a fidelity factor of the translation reaction, by catalyzing a one-codon backward translocation of tRNAs on improperly translocated ribosomes. Binds to mitochondrial ribosomes in a GTP-dependent manner. This chain is Translation factor guf1, mitochondrial (guf1), found in Talaromyces marneffei (strain ATCC 18224 / CBS 334.59 / QM 7333) (Penicillium marneffei).